The chain runs to 277 residues: Odontogenic ameloblast-associated protein (277 aa).

The first 15 residues, 1–15 (MRTLILLGILGATMS), serve as a signal peptide directing secretion. The tract at residues 103 to 124 (TQAGQLDPSQPQTPQQTQRGPK) is disordered. T115 is a glycosylation site (O-linked (GalNAc...) threonine). The interaction with ARHGEF5 stretch occupies residues 127–129 (MPS). Residues T208, T248, and T271 are each glycosylated (O-linked (GalNAc...) threonine).

It belongs to the ODAM family. In terms of assembly, interacts (via C-terminus) with ARHGEF5. Post-translationally, O-glycosylated.

It localises to the secreted. Its subcellular location is the cytoplasm. It is found in the nucleus. Its function is as follows. Tooth-associated epithelia protein that probably plays a role in odontogenesis, the complex process that results in the initiation and generation of the tooth. May be incorporated in the enamel matrix at the end of mineralization process. Involved in the induction of RHOA activity via interaction with ARHGEF and expression of downstream factors such as ROCK. Plays a role in attachment of the junctional epithelium to the tooth surface. This is Odontogenic ameloblast-associated protein (ODAM) from Bos taurus (Bovine).